The primary structure comprises 239 residues: Pyridoxine 5'-phosphate synthase (239 aa).

A 3-amino-2-oxopropyl phosphate-binding site is contributed by Asn-7. 9–10 provides a ligand contact to 1-deoxy-D-xylulose 5-phosphate; that stretch reads DH. Residue Arg-18 participates in 3-amino-2-oxopropyl phosphate binding. His-43 functions as the Proton acceptor in the catalytic mechanism. 1-deoxy-D-xylulose 5-phosphate is bound by residues Arg-45 and His-50. Residue Glu-70 is the Proton acceptor of the active site. Residue Thr-100 participates in 1-deoxy-D-xylulose 5-phosphate binding. His-191 serves as the catalytic Proton donor. 3-amino-2-oxopropyl phosphate contacts are provided by residues Gly-192 and 213 to 214; that span reads GH.

This sequence belongs to the PNP synthase family. As to quaternary structure, homooctamer; tetramer of dimers.

It is found in the cytoplasm. The enzyme catalyses 3-amino-2-oxopropyl phosphate + 1-deoxy-D-xylulose 5-phosphate = pyridoxine 5'-phosphate + phosphate + 2 H2O + H(+). The protein operates within cofactor biosynthesis; pyridoxine 5'-phosphate biosynthesis; pyridoxine 5'-phosphate from D-erythrose 4-phosphate: step 5/5. In terms of biological role, catalyzes the complicated ring closure reaction between the two acyclic compounds 1-deoxy-D-xylulose-5-phosphate (DXP) and 3-amino-2-oxopropyl phosphate (1-amino-acetone-3-phosphate or AAP) to form pyridoxine 5'-phosphate (PNP) and inorganic phosphate. This chain is Pyridoxine 5'-phosphate synthase, found in Synechococcus sp. (strain JA-2-3B'a(2-13)) (Cyanobacteria bacterium Yellowstone B-Prime).